Consider the following 1818-residue polypeptide: Unconventional myosin-Vb (1818 aa).

The 53-residue stretch at T8–P60 folds into the Myosin N-terminal SH3-like domain. The segment at V21–L40 is requires for interaction with LIMA1. The Myosin motor domain occupies V69 to A762. G163–T170 lines the ATP pocket. The actin-binding stretch occupies residues L641 to D663. 6 IQ domains span residues F765–S794, L788–A817, R813–I842, V836–A865, M861–V890, and E884–S913. Disordered stretches follow at residues L1086 to D1120 and Q1161 to D1188. The span at P1098 to I1118 shows a compositional bias: polar residues. Coiled coils occupy residues M1140–R1261 and L1313–Q1415. Residue S1416 is modified to Phosphoserine. Positions S1496 to E1773 constitute a Dilute domain.

Belongs to the TRAFAC class myosin-kinesin ATPase superfamily. Myosin family. In terms of assembly, component of the CART complex, at least composed of ACTN4, HGS/HRS, MYO5B and TRIM3. Interacts with RAB11FIP2. Interacts with RAB11A and RAB8A. Found in a complex with CFTR and RAB11A. Interacts with NPC1L1. Interacts with LIMA1.

The protein resides in the cytoplasm. Functionally, may be involved in vesicular trafficking via its association with the CART complex. The CART complex is necessary for efficient transferrin receptor recycling but not for EGFR degradation. Required in a complex with RAB11A and RAB11FIP2 for the transport of NPC1L1 to the plasma membrane. Together with RAB11A participates in CFTR trafficking to the plasma membrane and TF (transferrin) recycling in nonpolarized cells. Together with RAB11A and RAB8A participates in epithelial cell polarization. Together with RAB25 regulates transcytosis. Required for proper localization of bile salt export pump ABCB11 at the apical/canalicular plasma membrane of hepatocytes. This is Unconventional myosin-Vb (Myo5b) from Mus musculus (Mouse).